A 431-amino-acid polypeptide reads, in one-letter code: Adenylosuccinate synthetase (431 aa).

GTP-binding positions include 12–18 (GDEGKGK) and 40–42 (GHT). The active-site Proton acceptor is the Asp-13. Residues Asp-13 and Gly-40 each contribute to the Mg(2+) site. Residues 13 to 16 (DEGK), 38 to 41 (NAGH), Thr-131, Arg-145, Gln-225, Thr-240, and Arg-304 contribute to the IMP site. The Proton donor role is filled by His-41. 300–306 (TTTGRKR) contributes to the substrate binding site. Residues Arg-306, 332-334 (KLD), and 414-416 (STS) each bind GTP.

This sequence belongs to the adenylosuccinate synthetase family. In terms of assembly, homodimer. Requires Mg(2+) as cofactor.

The protein localises to the cytoplasm. It carries out the reaction IMP + L-aspartate + GTP = N(6)-(1,2-dicarboxyethyl)-AMP + GDP + phosphate + 2 H(+). It functions in the pathway purine metabolism; AMP biosynthesis via de novo pathway; AMP from IMP: step 1/2. Its function is as follows. Plays an important role in the de novo pathway of purine nucleotide biosynthesis. Catalyzes the first committed step in the biosynthesis of AMP from IMP. The chain is Adenylosuccinate synthetase from Dinoroseobacter shibae (strain DSM 16493 / NCIMB 14021 / DFL 12).